The primary structure comprises 637 residues: Biosynthetic arginine decarboxylase (637 aa).

At lysine 101 the chain carries N6-(pyridoxal phosphate)lysine. 286–296 contacts substrate; it reads FDVGGGLAVDY.

The protein belongs to the Orn/Lys/Arg decarboxylase class-II family. SpeA subfamily. The cofactor is Mg(2+). Requires pyridoxal 5'-phosphate as cofactor.

The catalysed reaction is L-arginine + H(+) = agmatine + CO2. It functions in the pathway amine and polyamine biosynthesis; agmatine biosynthesis; agmatine from L-arginine: step 1/1. Its function is as follows. Catalyzes the biosynthesis of agmatine from arginine. The chain is Biosynthetic arginine decarboxylase from Shewanella woodyi (strain ATCC 51908 / MS32).